The sequence spans 367 residues: Pyrimidine monooxygenase RutA (367 aa).

FMN contacts are provided by residues 49–50, Asn-115, Glu-124, 140–141, and Ser-190; these read IK and RY.

It belongs to the NtaA/SnaA/DszA monooxygenase family. RutA subfamily.

The enzyme catalyses uracil + FMNH2 + NADH + O2 = (Z)-3-ureidoacrylate + FMN + NAD(+) + H2O + H(+). It catalyses the reaction thymine + FMNH2 + NADH + O2 = (Z)-2-methylureidoacrylate + FMN + NAD(+) + H2O + H(+). In terms of biological role, catalyzes the pyrimidine ring opening between N-3 and C-4 by an unusual flavin hydroperoxide-catalyzed mechanism, adding oxygen atoms in the process to yield ureidoacrylate peracid, that immediately reacts with FMN forming ureidoacrylate and FMN-N(5)-oxide. The FMN-N(5)-oxide reacts spontaneously with NADH to produce FMN. Requires the flavin reductase RutF to regenerate FMN in vivo. The protein is Pyrimidine monooxygenase RutA of Yersinia enterocolitica serotype O:8 / biotype 1B (strain NCTC 13174 / 8081).